The chain runs to 259 residues: Exotoxin A regulatory protein (259 aa).

It localises to the cell inner membrane. Its function is as follows. Positive regulation of toxA gene transcription. The protein is Exotoxin A regulatory protein (toxR) of Pseudomonas aeruginosa (strain ATCC 15692 / DSM 22644 / CIP 104116 / JCM 14847 / LMG 12228 / 1C / PRS 101 / PAO1).